We begin with the raw amino-acid sequence, 604 residues long: Protein TAX4 (604 aa).

Disordered regions lie at residues 38 to 77 (HPNG…PRSI), 132 to 249 (SFSN…RQQE), 267 to 299 (GTLP…QQEN), 338 to 380 (DETF…KGLK), and 394 to 428 (PFPH…NEDK). Residues 176 to 185 (YDNNVRSRSI) are compositionally biased toward polar residues. Composition is skewed to low complexity over residues 186–203 (SPQV…SISS) and 224–240 (SMSS…KASL). 3 stretches are compositionally biased toward basic residues: residues 276 to 290 (SQRK…HRLL), 366 to 379 (KKKK…KKGL), and 396 to 421 (PHHH…HTSS). Positions 469–559 (ANEDDESHLQ…RVWNSVDGYV (91 aa)) constitute an EH domain.

The protein belongs to the IRS4 family. In terms of assembly, interacts with INP51.

In terms of biological role, with IRS4, acts as a positive regulator of INP51 activity and phosphatidylinositol 4,5-bisphosphate turnover. Negatively regulates signaling through the cell integrity pathway, including the MAP kinase SLT2. This chain is Protein TAX4 (TAX4), found in Saccharomyces cerevisiae (strain ATCC 204508 / S288c) (Baker's yeast).